A 325-amino-acid polypeptide reads, in one-letter code: tRNA dimethylallyltransferase (325 aa).

25 to 32 (GNTGSGKS) contributes to the ATP binding site. 27–32 (TGSGKS) serves as a coordination point for substrate. Residues 50–53 (DSRQ) form an interaction with substrate tRNA region.

This sequence belongs to the IPP transferase family. In terms of assembly, monomer. The cofactor is Mg(2+).

It catalyses the reaction adenosine(37) in tRNA + dimethylallyl diphosphate = N(6)-dimethylallyladenosine(37) in tRNA + diphosphate. Its function is as follows. Catalyzes the transfer of a dimethylallyl group onto the adenine at position 37 in tRNAs that read codons beginning with uridine, leading to the formation of N6-(dimethylallyl)adenosine (i(6)A). This is tRNA dimethylallyltransferase from Dehalococcoides mccartyi (strain ATCC BAA-2266 / KCTC 15142 / 195) (Dehalococcoides ethenogenes (strain 195)).